The chain runs to 83 residues: Cytochrome b559 subunit alpha (83 aa).

A helical transmembrane segment spans residues 21-35; that stretch reads IIHTITVPMLFLAGW. His-23 serves as a coordination point for heme.

The protein belongs to the PsbE/PsbF family. In terms of assembly, heterodimer of an alpha subunit and a beta subunit. PSII is composed of 1 copy each of membrane proteins PsbA, PsbB, PsbC, PsbD, PsbE, PsbF, PsbH, PsbI, PsbJ, PsbK, PsbL, PsbM, PsbT, PsbX, PsbY, PsbZ, Psb30/Ycf12, peripheral proteins PsbO, CyanoQ (PsbQ), PsbU, PsbV and a large number of cofactors. It forms dimeric complexes. The cofactor is heme b.

Its subcellular location is the cellular thylakoid membrane. Functionally, this b-type cytochrome is tightly associated with the reaction center of photosystem II (PSII). PSII is a light-driven water:plastoquinone oxidoreductase that uses light energy to abstract electrons from H(2)O, generating O(2) and a proton gradient subsequently used for ATP formation. It consists of a core antenna complex that captures photons, and an electron transfer chain that converts photonic excitation into a charge separation. This is Cytochrome b559 subunit alpha from Acaryochloris marina (strain MBIC 11017).